The sequence spans 424 residues: Cytoplasmic tRNA 2-thiolation protein 2 (424 aa).

The interval 357–385 is disordered; the sequence is PAAPETEEEEELSKKAHMEKSQEKTGDAD. Residues 368–385 are compositionally biased toward basic and acidic residues; it reads LSKKAHMEKSQEKTGDAD.

The protein belongs to the CTU2/NCS2 family.

The protein resides in the cytoplasm. It functions in the pathway tRNA modification; 5-methoxycarbonylmethyl-2-thiouridine-tRNA biosynthesis. Plays a central role in 2-thiolation of mcm(5)S(2)U at tRNA wobble positions of tRNA(Lys), tRNA(Glu) and tRNA(Gln). May act by forming a heterodimer with NCS6 that ligates sulfur from thiocarboxylated URM1 onto the uridine of tRNAs at wobble position. Prior mcm(5) tRNA modification by the elongator complex is required for 2-thiolation. May also be involved in protein urmylation. The sequence is that of Cytoplasmic tRNA 2-thiolation protein 2 from Yarrowia lipolytica (strain CLIB 122 / E 150) (Yeast).